Reading from the N-terminus, the 390-residue chain is Transaldolase (390 aa).

The active-site Schiff-base intermediate with substrate is K135. EF-hand domains lie at 329 to 364 (AFCH…FDAL) and 365 to 388 (DHDH…LALT). D342, D344, D346, C348, E353, D365, D367, D369, R371, and D376 together coordinate Ca(2+).

It belongs to the transaldolase family. Type 1 subfamily.

The protein localises to the cytoplasm. The catalysed reaction is D-sedoheptulose 7-phosphate + D-glyceraldehyde 3-phosphate = D-erythrose 4-phosphate + beta-D-fructose 6-phosphate. The protein operates within carbohydrate degradation; pentose phosphate pathway; D-glyceraldehyde 3-phosphate and beta-D-fructose 6-phosphate from D-ribose 5-phosphate and D-xylulose 5-phosphate (non-oxidative stage): step 2/3. In terms of biological role, transaldolase is important for the balance of metabolites in the pentose-phosphate pathway. In Prochlorococcus marinus (strain MIT 9313), this protein is Transaldolase.